A 323-amino-acid chain; its full sequence is Transcription factor MafB (323 aa).

Lysine 32 is covalently cross-linked (Glycyl lysine isopeptide (Lys-Gly) (interchain with G-Cter in SUMO)). A compositionally biased stretch (basic and acidic residues) spans 34 to 43; the sequence is EPLGRAERPG. Disordered stretches follow at residues 34–78 and 116–210; these read EPLG…PTEQ and PVPQ…VEDR. The span at 54–76 shows a compositional bias: low complexity; that stretch reads SLSSTPLSTPCSSVPSSPSFSPT. Composition is skewed to basic residues over residues 129 to 143 and 159 to 168; these read GAHH…HPHH and AHPHHHHHHQ. Residues 192–201 show a composition bias toward low complexity; it reads PHATASATAA. The tract at residues 238–263 is basic motif; that stretch reads RLKQKRRTLKNRGYAQSCRYKRVQQK. The bZIP domain maps to 238–301; the sequence is RLKQKRRTLK…DAHKVKCEKL (64 aa). The tract at residues 266–287 is leucine-zipper; that stretch reads LENEKTQLIQQVEQLKQEVSRL. A Glycyl lysine isopeptide (Lys-Gly) (interchain with G-Cter in SUMO) cross-link involves residue lysine 297.

It belongs to the bZIP family. Maf subfamily. In terms of assembly, homodimer or heterodimer with other bHLH-Zip transcription factors. Binds DNA as a homodimer or a heterodimer. Forms homodimers and heterodimers with FOS, FOSB and FOSL2, but not with JUN proteins (JUN, JUNB and JUND). Interacts with PAX6; the interaction is direct. Interacts with ETS1 and LRP1. Interacts with the intracellular cytoplasmic domain of LRP1 (LRPICD); the interaction results in a moderate reduction of MAFB transcriptional potential. Post-translationally, sumoylated. Sumoylation on Lys-32 and Lys-297 stimulates its transcriptional repression activity and promotes macrophage differentiation from myeloid progenitors.

The protein localises to the nucleus. Functionally, acts as a transcriptional activator or repressor. Plays a pivotal role in regulating lineage-specific hematopoiesis by repressing ETS1-mediated transcription of erythroid-specific genes in myeloid cells. Required for monocytic, macrophage, osteoclast, podocyte and islet beta cell differentiation. Involved in renal tubule survival and F4/80 maturation. Activates the insulin and glucagon promoters. Together with PAX6, transactivates weakly the glucagon gene promoter through the G1 element. SUMO modification controls its transcriptional activity and ability to specify macrophage fate. Binds element G1 on the glucagon promoter. Involved either as an oncogene or as a tumor suppressor, depending on the cell context. Required for the transcriptional activation of HOXB3 in the rhombomere r5 in the hindbrain. In Macaca fascicularis (Crab-eating macaque), this protein is Transcription factor MafB (MAFB).